Consider the following 1578-residue polypeptide: E3 ubiquitin-protein ligase HECW2 (1578 aa).

Position 48 is a phosphoserine (S48). In terms of domain architecture, C2 spans 171 to 298; that stretch reads MEGGASGSLH…LERQAGDQML (128 aa). Disordered regions lie at residues 341-453 and 496-802; these read HTVN…FPTD and IDDG…PSVR. Polar residues predominate over residues 386–406; the sequence is RTSSTLEIDTEDLISTSSRNS. The segment covering 518–532 has biased composition (basic and acidic residues); that stretch reads ASIHETASLEERLEN. Residues 559–576 show a composition bias toward polar residues; it reads SADQGSTELCSSQEVDQP. Residues 577-593 show a composition bias toward low complexity; it reads TSGADAGASDTSGGSRR. Polar residues-rich tracts occupy residues 597-614, 643-664, and 688-708; these read ETES…SSET, SSCN…SSLE, and PTSS…SSLP. Low complexity-rich tracts occupy residues 721 to 735, 746 to 755, and 769 to 782; these read AAEA…ELGE, AAAAAPAAAA, and AQGA…QEEG. Residues 737–1074 are interaction with TP73; it reads WQRRGSLEGA…PRPSSTFNTV (338 aa). Residues 813-846 form the WW 1 domain; it reads EALPPNWEARIDSHGRIFYVDHVNRTTTWQRPTA. A coiled-coil region spans residues 853–880; sequence LQRSNSIQQMEQLNRRYQSIRRTMTNER. 2 positions are modified to phosphoserine: S858 and S915. Positions 991 to 1024 constitute a WW 2 domain; it reads LELPRGWEMKHDHQGKAFFVDHNSRTTTFIDPRL. 2 disordered regions span residues 1030-1075 and 1167-1193; these read RPTS…NTVS and CQSP…RAPA. The segment covering 1037–1046 has biased composition (basic residues); that stretch reads HRQHLTRQRS. The span at 1167 to 1187 shows a compositional bias: polar residues; that stretch reads CQSPRGSPVSSPQNSPGTQRA. A Phosphoserine modification is found at S1181. The HECT domain occupies 1243–1578; sequence SRKDLQRNKL…VEETSTFGLE (336 aa). C1546 functions as the Glycyl thioester intermediate in the catalytic mechanism.

In terms of assembly, interacts with TP73. Interacts with FZR1.

It is found in the cytoplasm. The protein resides in the cytoskeleton. Its subcellular location is the spindle. It catalyses the reaction S-ubiquitinyl-[E2 ubiquitin-conjugating enzyme]-L-cysteine + [acceptor protein]-L-lysine = [E2 ubiquitin-conjugating enzyme]-L-cysteine + N(6)-ubiquitinyl-[acceptor protein]-L-lysine.. The protein operates within protein modification; protein ubiquitination. In terms of biological role, E3 ubiquitin-protein ligase that mediates ubiquitination of TP73. Acts to stabilize TP73 and enhance activation of transcription by TP73. Involved in the regulation of mitotic metaphase/anaphase transition. The polypeptide is E3 ubiquitin-protein ligase HECW2 (Hecw2) (Mus musculus (Mouse)).